A 346-amino-acid chain; its full sequence is Outer membrane protein A (346 aa).

The first 21 residues, 1–21 (MKKTAIAIAVALAGFATVAQA), serve as a signal peptide directing secretion. 8 beta stranded membrane passes run 27-37 (TWYTGAKLGWS), 55-66 (QLGAGAFGGYQV), 70-78 (VGFEMGYDW), 96-107 (QGVQLTAKLGYP), 112-120 (LDIYTRLGG), 142-151 (PVFAGGVEYA), 156-163 (IATRLEYQ), and 182-190 (MLSLGVSYR). The segment at 197 to 208 (APVVAPAPAPAP) is hinge-like. 4 tandem repeats follow at residues 201-202 (AP), 203-204 (AP), 205-206 (AP), and 207-208 (AP). The 4 X 2 AA tandem repeats of A-P stretch occupies residues 201–208 (APAPAPAP). One can recognise an OmpA-like domain in the interval 210–338 (VQTKHFTLKS…RVEIEVKGIK (129 aa)). A disulfide bridge connects residues Cys-311 and Cys-323.

It belongs to the outer membrane OOP (TC 1.B.6) superfamily. OmpA family. Monomer and homodimer.

Its subcellular location is the cell outer membrane. With TolR probably plays a role in maintaining the position of the peptidoglycan cell wall in the periplasm. Acts as a porin with low permeability that allows slow penetration of small solutes; an internal gate slows down solute passage. Its function is as follows. Required for conjugation with F-type plasmids; probably serves as the mating receptor on recipient cells. The sequence is that of Outer membrane protein A from Escherichia coli O157:H7.